Here is a 176-residue protein sequence, read N- to C-terminus: WASH complex subunit 3 (176 aa).

A coiled-coil region spans residues 47–74 (ETKFVEMERQLQKTEAALIILEAKLASI). Disordered regions lie at residues 84–123 (ATEA…PESV) and 152–176 (KMQS…GQRE). Over residues 104-115 (TTEPPTTENPTE) the composition is skewed to low complexity.

The protein belongs to the CCDC53 family. Component of the WASH complex.

The protein resides in the early endosome. In terms of biological role, acts at least in part as component of the WASH complex which may regulate wash nucleation-promoting factor (NPF) activity and is required for its membrane targeting during endosomal sorting. During embryogenesis, not involved in the wash-dependent developmental migration of hemocytes anteriorly from the tail. The sequence is that of WASH complex subunit 3 from Drosophila melanogaster (Fruit fly).